Reading from the N-terminus, the 309-residue chain is Uricase (309 aa).

Ala-2 carries the post-translational modification N-acetylalanine. Active-site charge relay system residues include Lys-16 and Thr-63. Urate contacts are provided by Thr-63, Asp-64, Phe-165, Arg-182, Val-237, Gln-238, and Asn-264. The active-site Charge relay system is His-266. The Microbody targeting signal motif lies at 307–309; sequence SKL.

The protein belongs to the uricase family.

The protein localises to the peroxisome. The catalysed reaction is urate + O2 + H2O = 5-hydroxyisourate + H2O2. It functions in the pathway purine metabolism; urate degradation; (S)-allantoin from urate: step 1/3. In terms of biological role, catalyzes the oxidation of uric acid to 5-hydroxyisourate, which is further processed to form (S)-allantoin. This Arabidopsis thaliana (Mouse-ear cress) protein is Uricase.